We begin with the raw amino-acid sequence, 114 residues long: Mobility group protein 1A (114 aa).

Positions 5–71 (PKRPLSAYML…EYEKAMKEFE (67 aa)) form a DNA-binding region, HMG box. The disordered stretch occupies residues 69-114 (EFERNGGDKSSGASTKKRGKAAEKKKPAKKSKKKDSEDDEEEDESD). Over residues 105-114 (EDDEEEDESD) the composition is skewed to acidic residues.

This sequence belongs to the HMGB family.

It localises to the nucleus. The protein localises to the chromosome. Found in condensed chromomeres. Binds preferentially to AT-rich DNA. The chain is Mobility group protein 1A (HMG1A) from Chironomus tentans (Midge).